A 166-amino-acid polypeptide reads, in one-letter code: MKYTSSFLALLLSVLLGFSGSYGQGPFFKEIENLKEYFNASNPDVAKGGPLFSEILKNWKEESDKKIIQSQIVSFYFKLFENLKDNQVIQRSMDIIKQDMFQKFLNGSSEKLEDFKKLIQIPVDDLQIQRKAINELIKVMNDLSPKSNLRKRKRSQNLFRGRRASM.

A signal peptide spans 1–23 (MKYTSSFLALLLSVLLGFSGSYG). Gln-24 carries the pyrrolidone carboxylic acid modification. 2 N-linked (GlcNAc...) asparagine glycosylation sites follow: Asn-39 and Asn-106.

The protein belongs to the type II (or gamma) interferon family. Homodimer. Interacts with IFNGR1 (via extracellular domain); this interaction promotes IFNGR1 dimerization. Released primarily from activated T lymphocytes.

Its subcellular location is the secreted. In terms of biological role, type II interferon produced by immune cells such as T-cells and NK cells that plays crucial roles in antimicrobial, antiviral, and antitumor responses by activating effector immune cells and enhancing antigen presentation. Primarily signals through the JAK-STAT pathway after interaction with its receptor IFNGR1 to affect gene regulation. Upon IFNG binding, IFNGR1 intracellular domain opens out to allow association of downstream signaling components JAK2, JAK1 and STAT1, leading to STAT1 activation, nuclear translocation and transcription of IFNG-regulated genes. Many of the induced genes are transcription factors such as IRF1 that are able to further drive regulation of a next wave of transcription. Plays a role in class I antigen presentation pathway by inducing a replacement of catalytic proteasome subunits with immunoproteasome subunits. In turn, increases the quantity, quality, and repertoire of peptides for class I MHC loading. Increases the efficiency of peptide generation also by inducing the expression of activator PA28 that associates with the proteasome and alters its proteolytic cleavage preference. Up-regulates as well MHC II complexes on the cell surface by promoting expression of several key molecules such as cathepsins B/CTSB, H/CTSH, and L/CTSL. Participates in the regulation of hematopoietic stem cells during development and under homeostatic conditions by affecting their development, quiescence, and differentiation. This chain is Interferon gamma (IFNG), found in Capra hircus (Goat).